The primary structure comprises 690 residues: Protein arginine N-methyltransferase 7 (690 aa).

SAM-dependent MTase PRMT-type domains lie at 14–357 (QNSW…YSLW) and 366–690 (TKSV…QKKL).

Belongs to the class I-like SAM-binding methyltransferase superfamily. Protein arginine N-methyltransferase family. PRMT7 subfamily.

In terms of biological role, essential arginine methyltransferase that can both catalyze the formation of omega-N monomethylarginine (MMA) and symmetrical dimethylarginine (sDMA). Specifically mediates the symmetrical dimethylation of arginine residues in the small nuclear ribonucleoproteins SmD1 and SmD3. The polypeptide is Protein arginine N-methyltransferase 7 (Art7) (Drosophila sechellia (Fruit fly)).